Consider the following 261-residue polypeptide: Oxidoreductase ptaF (261 aa).

Belongs to the avfA family.

The protein operates within secondary metabolite biosynthesis. In terms of biological role, oxidoreductase; part of the gene cluster that mediates the biosynthesis of pestheic acid, a diphenyl ether which is a biosynthetic precursor of the unique chloropupukeananes. The biosynthesis initiates from condensation of acetate and malonate units catalyzed by the non-reducing PKS ptaA. As the ptaA protein is TE/CLC domain-deficient, hydrolysis and Claisen cyclization of the polyketide could be catalyzed by ptaB containing a beta-lactamase domain. The ptaB protein might hydrolyze the thioester bond between the ACP of ptaA and the intermediate to release atrochrysone carboxylic acid, which is spontaneously dehydrated to form endocrocin anthrone. Endocrocin anthrone is then converted to endocrocin, catalyzed by the anthrone oxygenase ptaC. Spontaneous decarboxylation of endocrocin occurs to generate emodin. An O-methyltransferase (ptaH or ptaI) could methylate emodin to form physcion. PtaJ could then catalyze the oxidative cleavage of physcion, and rotation of the intermediate could then afford desmethylisosulochrin. PtaF, a putative NADH-dependent oxidoreductase, might also participate in the oxidative cleavage step. Desmethylisosulochrin is then transformed by another O-methyltransferase (ptaH or ptaI) to form isosulochrin. Chlorination of isosulochrin by ptaM in the cyclohexadienone B ring then produces chloroisosulochrin. PtaE is responsible for the oxidative coupling reactions of both benzophenones isosulouchrin and chloroisosulochrin to RES-1214-1 and pestheic acid respectively, regardless of chlorination. This is Oxidoreductase ptaF from Pestalotiopsis fici (strain W106-1 / CGMCC3.15140).